Here is a 688-residue protein sequence, read N- to C-terminus: Elongation factor G (688 aa).

A tr-type G domain is found at 8–282 (DKFRNFGIMA…GVVDYLPSPL (275 aa)). Residues 17-24 (AHIDAGKT), 81-85 (DTPGH), and 135-138 (NKMD) contribute to the GTP site.

This sequence belongs to the TRAFAC class translation factor GTPase superfamily. Classic translation factor GTPase family. EF-G/EF-2 subfamily.

The protein localises to the cytoplasm. Its function is as follows. Catalyzes the GTP-dependent ribosomal translocation step during translation elongation. During this step, the ribosome changes from the pre-translocational (PRE) to the post-translocational (POST) state as the newly formed A-site-bound peptidyl-tRNA and P-site-bound deacylated tRNA move to the P and E sites, respectively. Catalyzes the coordinated movement of the two tRNA molecules, the mRNA and conformational changes in the ribosome. The chain is Elongation factor G from Clostridium beijerinckii (strain ATCC 51743 / NCIMB 8052) (Clostridium acetobutylicum).